A 165-amino-acid chain; its full sequence is Peptide deformylase (165 aa).

Fe cation-binding residues include C93 and H135. E136 is an active-site residue. H139 is a Fe cation binding site.

The protein belongs to the polypeptide deformylase family. Fe(2+) serves as cofactor.

The enzyme catalyses N-terminal N-formyl-L-methionyl-[peptide] + H2O = N-terminal L-methionyl-[peptide] + formate. Functionally, removes the formyl group from the N-terminal Met of newly synthesized proteins. Requires at least a dipeptide for an efficient rate of reaction. N-terminal L-methionine is a prerequisite for activity but the enzyme has broad specificity at other positions. This is Peptide deformylase from Thermodesulfovibrio yellowstonii (strain ATCC 51303 / DSM 11347 / YP87).